Here is a 150-residue protein sequence, read N- to C-terminus: Ribosome-binding factor A (150 aa).

The interval 131-150 (LSHDDDEDGGADEAPRNGDE) is disordered.

It belongs to the RbfA family. As to quaternary structure, monomer. Binds 30S ribosomal subunits, but not 50S ribosomal subunits or 70S ribosomes.

Its subcellular location is the cytoplasm. In terms of biological role, one of several proteins that assist in the late maturation steps of the functional core of the 30S ribosomal subunit. Associates with free 30S ribosomal subunits (but not with 30S subunits that are part of 70S ribosomes or polysomes). Required for efficient processing of 16S rRNA. May interact with the 5'-terminal helix region of 16S rRNA. This chain is Ribosome-binding factor A, found in Brucella melitensis biotype 2 (strain ATCC 23457).